The following is a 397-amino-acid chain: Cephalotocin receptor 1 (397 aa).

Residues Met-1–Glu-48 are Extracellular-facing. N-linked (GlcNAc...) asparagine glycosylation is found at Asn-18, Asn-27, and Asn-33. A helical membrane pass occupies residues Val-49 to Thr-69. At Leu-70–Asp-91 the chain is on the cytoplasmic side. A helical transmembrane segment spans residues Leu-92–Leu-112. The Extracellular segment spans residues Gly-113 to Leu-120. Cys-118 and Cys-194 are joined by a disulfide. The helical transmembrane segment at Val-121–Ile-141 threads the bilayer. Residues Asp-142–His-162 lie on the Cytoplasmic side of the membrane. The chain crosses the membrane as a helical span at residues Val-163–Trp-183. At Ser-184 to Lys-205 the chain is on the extracellular side. A helical transmembrane segment spans residues Phe-206–Phe-226. Topologically, residues Tyr-227–Ser-293 are cytoplasmic. The helical transmembrane segment at Val-294–Cys-314 threads the bilayer. Residues Gln-315–Tyr-331 lie on the Extracellular side of the membrane. Residues Thr-332–Phe-352 traverse the membrane as a helical segment. At Ser-353–Asn-397 the chain is on the cytoplasmic side.

The protein belongs to the G-protein coupled receptor 1 family. Vasopressin/oxytocin receptor subfamily. In terms of tissue distribution, present in brain, buccal ganglion, gastric ganglion, olfactory lube, peduncle lobe, optical lobe, pancreas, the oviduct and the ovary.

It localises to the cell membrane. In terms of biological role, acts as a receptor for cephalotocin. This is Cephalotocin receptor 1 from Octopus vulgaris (Common octopus).